The primary structure comprises 424 residues: Cyclin-dependent kinase D-1 (424 aa).

The Protein kinase domain occupies 19 to 299 (YLKREVLGEG…AQQALEHRYF (281 aa)). ATP-binding positions include 25–33 (LGEGTYGVV) and K48. T29 carries the phosphothreonine modification. The residue at position 30 (Y30) is a Phosphotyrosine. The active-site Proton acceptor is the D141. S168 is modified (phosphoserine). T174 is modified (phosphothreonine). 2 disordered regions span residues 303-337 (PAPT…PVVL) and 359-424 (ADRT…GYTE). Positions 359–374 (ADRTEEHPSGARHMDD) are enriched in basic and acidic residues.

This sequence belongs to the protein kinase superfamily. CMGC Ser/Thr protein kinase family. CDC2/CDKX subfamily. As to quaternary structure, interacts with CYCH1-1. Expressed in actively dividing cells of roots, leaves and shoots. Expressed in the intercalary meristem and the elongation zone of internodes.

The protein localises to the nucleus. It carries out the reaction L-seryl-[protein] + ATP = O-phospho-L-seryl-[protein] + ADP + H(+). It catalyses the reaction L-threonyl-[protein] + ATP = O-phospho-L-threonyl-[protein] + ADP + H(+). The enzyme catalyses [DNA-directed RNA polymerase] + ATP = phospho-[DNA-directed RNA polymerase] + ADP + H(+). In terms of biological role, CDK-activating kinase that may control G1/S phase progression. May control the rate of cell differentiation to accomplish proper development of organs, or in response to a changing environment. Forms a complex with cyclin CYCH1-1 that phosphorylates CDKA-1 and the C-terminal domain (CTD) of the large subunit of RNA polymerase II. The polypeptide is Cyclin-dependent kinase D-1 (CDKD-1) (Oryza sativa subsp. japonica (Rice)).